The primary structure comprises 159 residues: ATP synthase subunit b (159 aa).

The helical transmembrane segment at 7-27 (TFVWTIINFLLLLVVLSYFLF) threads the bilayer.

It belongs to the ATPase B chain family. In terms of assembly, F-type ATPases have 2 components, F(1) - the catalytic core - and F(0) - the membrane proton channel. F(1) has five subunits: alpha(3), beta(3), gamma(1), delta(1), epsilon(1). F(0) has three main subunits: a(1), b(2) and c(10-14). The alpha and beta chains form an alternating ring which encloses part of the gamma chain. F(1) is attached to F(0) by a central stalk formed by the gamma and epsilon chains, while a peripheral stalk is formed by the delta and b chains.

The protein resides in the cell membrane. F(1)F(0) ATP synthase produces ATP from ADP in the presence of a proton or sodium gradient. F-type ATPases consist of two structural domains, F(1) containing the extramembraneous catalytic core and F(0) containing the membrane proton channel, linked together by a central stalk and a peripheral stalk. During catalysis, ATP synthesis in the catalytic domain of F(1) is coupled via a rotary mechanism of the central stalk subunits to proton translocation. Functionally, component of the F(0) channel, it forms part of the peripheral stalk, linking F(1) to F(0). The protein is ATP synthase subunit b of Clostridium novyi (strain NT).